The sequence spans 265 residues: Glutamate racemase (265 aa).

Substrate-binding positions include 7–8 and 39–40; these read DS and YG. The Proton donor/acceptor role is filled by C70. A substrate-binding site is contributed by 71–72; that stretch reads NT. The Proton donor/acceptor role is filled by C177.

The protein belongs to the aspartate/glutamate racemases family.

The catalysed reaction is L-glutamate = D-glutamate. The protein operates within cell wall biogenesis; peptidoglycan biosynthesis. Functionally, provides the (R)-glutamate required for cell wall biosynthesis. In Prochlorococcus marinus (strain NATL1A), this protein is Glutamate racemase.